The following is a 431-amino-acid chain: Glutamate-1-semialdehyde 2,1-aminomutase (431 aa).

The residue at position 269 (K269) is an N6-(pyridoxal phosphate)lysine.

It belongs to the class-III pyridoxal-phosphate-dependent aminotransferase family. HemL subfamily. In terms of assembly, homodimer. Requires pyridoxal 5'-phosphate as cofactor.

It is found in the cytoplasm. It catalyses the reaction (S)-4-amino-5-oxopentanoate = 5-aminolevulinate. Its pathway is porphyrin-containing compound metabolism; protoporphyrin-IX biosynthesis; 5-aminolevulinate from L-glutamyl-tRNA(Glu): step 2/2. This chain is Glutamate-1-semialdehyde 2,1-aminomutase, found in Francisella tularensis subsp. holarctica (strain LVS).